Reading from the N-terminus, the 426-residue chain is C4-dicarboxylate transport protein (426 aa).

Transmembrane regions (helical) follow at residues 8 to 28 (VLYVQVIVAIIIGIGLGHFYP), 44 to 64 (LIKMVIGPIIFCTVVTGIAGM), 78 to 98 (LLYFEIVSTFALVLGLIATHV), 148 to 168 (GEILQILLIALLFGAVLATAG), 173 to 193 (VVTGFIDGLSHVLFGIVRIIT), 222 to 242 (LIGTFYLTSVVFVVVVLGIIA), 297 to 317 (GYSFNLDGTNIYMTMAVLFIA), and 355 to 375 (AATLAVVPTIPLSGMVLILGI).

This sequence belongs to the dicarboxylate/amino acid:cation symporter (DAACS) (TC 2.A.23) family.

Its subcellular location is the cell inner membrane. Functionally, responsible for the transport of dicarboxylates such as succinate, fumarate, and malate from the periplasm across the membrane. In Paraburkholderia xenovorans (strain LB400), this protein is C4-dicarboxylate transport protein.